An 887-amino-acid chain; its full sequence is Alanine--tRNA ligase (887 aa).

Zn(2+)-binding residues include His-565, His-569, Cys-674, and His-678.

Belongs to the class-II aminoacyl-tRNA synthetase family. Zn(2+) is required as a cofactor.

The protein localises to the cytoplasm. The catalysed reaction is tRNA(Ala) + L-alanine + ATP = L-alanyl-tRNA(Ala) + AMP + diphosphate. In terms of biological role, catalyzes the attachment of alanine to tRNA(Ala) in a two-step reaction: alanine is first activated by ATP to form Ala-AMP and then transferred to the acceptor end of tRNA(Ala). Also edits incorrectly charged Ser-tRNA(Ala) and Gly-tRNA(Ala) via its editing domain. The polypeptide is Alanine--tRNA ligase (Erythrobacter litoralis (strain HTCC2594)).